The primary structure comprises 379 residues: UDP-N-acetylglucosamine--N-acetylmuramyl-(pentapeptide) pyrophosphoryl-undecaprenol N-acetylglucosamine transferase (379 aa).

UDP-N-acetyl-alpha-D-glucosamine contacts are provided by residues 13-15 (TGG), asparagine 123, arginine 166, serine 194, and glutamine 295.

Belongs to the glycosyltransferase 28 family. MurG subfamily.

It localises to the cell inner membrane. The enzyme catalyses di-trans,octa-cis-undecaprenyl diphospho-N-acetyl-alpha-D-muramoyl-L-alanyl-D-glutamyl-meso-2,6-diaminopimeloyl-D-alanyl-D-alanine + UDP-N-acetyl-alpha-D-glucosamine = di-trans,octa-cis-undecaprenyl diphospho-[N-acetyl-alpha-D-glucosaminyl-(1-&gt;4)]-N-acetyl-alpha-D-muramoyl-L-alanyl-D-glutamyl-meso-2,6-diaminopimeloyl-D-alanyl-D-alanine + UDP + H(+). The protein operates within cell wall biogenesis; peptidoglycan biosynthesis. Functionally, cell wall formation. Catalyzes the transfer of a GlcNAc subunit on undecaprenyl-pyrophosphoryl-MurNAc-pentapeptide (lipid intermediate I) to form undecaprenyl-pyrophosphoryl-MurNAc-(pentapeptide)GlcNAc (lipid intermediate II). The protein is UDP-N-acetylglucosamine--N-acetylmuramyl-(pentapeptide) pyrophosphoryl-undecaprenol N-acetylglucosamine transferase of Rhodospirillum centenum (strain ATCC 51521 / SW).